A 412-amino-acid chain; its full sequence is CCA-adding enzyme (412 aa).

Residues S41 and K44 each contribute to the ATP site. CTP contacts are provided by S41 and K44. Mg(2+) contacts are provided by D53, D55, and D106. ATP contacts are provided by H129, K149, and Y158. CTP-binding residues include H129, K149, and Y158.

The protein belongs to the tRNA nucleotidyltransferase/poly(A) polymerase family. Archaeal CCA-adding enzyme subfamily. Homodimer. Mg(2+) serves as cofactor.

It carries out the reaction a tRNA precursor + 2 CTP + ATP = a tRNA with a 3' CCA end + 3 diphosphate. The catalysed reaction is a tRNA with a 3' CCA end + 2 CTP + ATP = a tRNA with a 3' CCACCA end + 3 diphosphate. Catalyzes the addition and repair of the essential 3'-terminal CCA sequence in tRNAs without using a nucleic acid template. Adds these three nucleotides in the order of C, C, and A to the tRNA nucleotide-73, using CTP and ATP as substrates and producing inorganic pyrophosphate. tRNA 3'-terminal CCA addition is required both for tRNA processing and repair. Also involved in tRNA surveillance by mediating tandem CCA addition to generate a CCACCA at the 3' terminus of unstable tRNAs. While stable tRNAs receive only 3'-terminal CCA, unstable tRNAs are marked with CCACCA and rapidly degraded. This Saccharolobus islandicus (strain Y.G.57.14 / Yellowstone #1) (Sulfolobus islandicus) protein is CCA-adding enzyme.